The primary structure comprises 374 residues: UDP-N-acetylglucosamine--N-acetylmuramyl-(pentapeptide) pyrophosphoryl-undecaprenol N-acetylglucosamine transferase (374 aa).

UDP-N-acetyl-alpha-D-glucosamine is bound by residues 13 to 15 (TGG), Asn124, Arg165, Ser193, and Gln294.

It belongs to the glycosyltransferase 28 family. MurG subfamily.

It is found in the cell inner membrane. It catalyses the reaction di-trans,octa-cis-undecaprenyl diphospho-N-acetyl-alpha-D-muramoyl-L-alanyl-D-glutamyl-meso-2,6-diaminopimeloyl-D-alanyl-D-alanine + UDP-N-acetyl-alpha-D-glucosamine = di-trans,octa-cis-undecaprenyl diphospho-[N-acetyl-alpha-D-glucosaminyl-(1-&gt;4)]-N-acetyl-alpha-D-muramoyl-L-alanyl-D-glutamyl-meso-2,6-diaminopimeloyl-D-alanyl-D-alanine + UDP + H(+). It functions in the pathway cell wall biogenesis; peptidoglycan biosynthesis. Its function is as follows. Cell wall formation. Catalyzes the transfer of a GlcNAc subunit on undecaprenyl-pyrophosphoryl-MurNAc-pentapeptide (lipid intermediate I) to form undecaprenyl-pyrophosphoryl-MurNAc-(pentapeptide)GlcNAc (lipid intermediate II). The sequence is that of UDP-N-acetylglucosamine--N-acetylmuramyl-(pentapeptide) pyrophosphoryl-undecaprenol N-acetylglucosamine transferase from Rhizobium etli (strain CIAT 652).